The following is a 953-amino-acid chain: Coatomer subunit beta (953 aa).

Thr-2 carries the N-acetylthreonine modification. HEAT repeat units lie at residues 96-131, 132-168, 240-276, 277-314, 316-353, and 396-433; these read HEMI…KEAE, LLEP…NFEH, SERA…SAPT, AIKA…HPAH, RVLQ…SRNV, and DMAA…RFDN. Lys-494 is subject to N6-acetyllysine.

As to quaternary structure, oligomeric complex that consists of at least the alpha, beta, beta', gamma, delta, epsilon and zeta subunits. Interacts (via C-terminus) with HIV-1 Nef; the interaction is direct. Interacts with CAPN8 and PRKCE. Interacts with SCYL1. Interacts with COPG1. Interacts with ARF1 (myristoylated); this interaction is required for binding of COPB1 to Golgi membranes. Interacts (via trunk domain) with ARF1 (via switch I region); the interaction is direct. Interacts with KCNK2 (via N-terminus); this interaction increases the channel-mediated whole cell currents and promotes plasma membrane expression of KCNK2. Interacts with anthrax lethal factor (LF); this interaction may facilitate endosomal vesicle membrane translocation of LF and its release from the lumen of endosomal vesicles to external milieu. Interacts with STX17. Interacts with TMEM115. Interacts with TMEM41B.

The protein resides in the cytoplasm. The protein localises to the golgi apparatus membrane. Its subcellular location is the cytoplasmic vesicle. It localises to the COPI-coated vesicle membrane. It is found in the cell membrane. The protein resides in the endoplasmic reticulum-Golgi intermediate compartment. Functionally, the coatomer is a cytosolic protein complex that binds to dilysine motifs and reversibly associates with Golgi non-clathrin-coated vesicles, which further mediate biosynthetic protein transport from the ER, via the Golgi up to the trans Golgi network. Coatomer complex is required for budding from Golgi membranes, and is essential for the retrograde Golgi-to-ER transport of dilysine-tagged proteins. In mammals, the coatomer can only be recruited by membranes associated to ADP-ribosylation factors (ARFs), which are small GTP-binding proteins; the complex also influences the Golgi structural integrity, as well as the processing, activity, and endocytic recycling of LDL receptors. Plays a functional role in facilitating the transport of kappa-type opioid receptor mRNAs into axons and enhances translation of these proteins. Required for limiting lipid storage in lipid droplets. Involved in lipid homeostasis by regulating the presence of perilipin family members PLIN2 and PLIN3 at the lipid droplet surface and promoting the association of adipocyte surface triglyceride lipase (PNPLA2) with the lipid droplet to mediate lipolysis. Involved in the Golgi disassembly and reassembly processes during cell cycle. Involved in autophagy by playing a role in early endosome function. Plays a role in organellar compartmentalization of secretory compartments including endoplasmic reticulum (ER)-Golgi intermediate compartment (ERGIC), Golgi, trans-Golgi network (TGN) and recycling endosomes, and in biosynthetic transport of CAV1. Promotes degradation of Nef cellular targets CD4 and MHC class I antigens by facilitating their trafficking to degradative compartments. The protein is Coatomer subunit beta (COPB1) of Pongo abelii (Sumatran orangutan).